We begin with the raw amino-acid sequence, 266 residues long: Elongation factor Ts (266 aa).

The involved in Mg(2+) ion dislocation from EF-Tu stretch occupies residues 80–83; that stretch reads TDFV.

Belongs to the EF-Ts family.

The protein resides in the cytoplasm. In terms of biological role, associates with the EF-Tu.GDP complex and induces the exchange of GDP to GTP. It remains bound to the aminoacyl-tRNA.EF-Tu.GTP complex up to the GTP hydrolysis stage on the ribosome. The sequence is that of Elongation factor Ts from Buchnera aphidicola subsp. Baizongia pistaciae (strain Bp).